A 394-amino-acid chain; its full sequence is MKKWLFTSESVTEGHPDKIADQVSDAILDAMLEQDPESRVAVETLVATGVAVVAGEVTTKAYVDIPRIVRDTILEIGYTRAKFGFDGETCAVLTSIDEQSPDIALGVNKSLEAKNDGKDKYDIIGAGDQGMMFGYATNETEEMMPLPIVLAHNLARRLATVRKERIVEGFRPDGKTQVTVLYEDGKPIGVKTIVVSTQHDPAMTQEEIEQLVKEHVIKAVVPEEMMLDGIETFVNPTGRFVKGGPAADTGLTGRKIIVDTYGGWIPHGGGAFSGKDPTKVDRSAHYMARYVAKNIVAAGLADRVTLQIAYAIGVAHPVSFMIDAHGTEKVALEKLEKVVKEVFDFRPAAIIDKLNLRRPIYKQVAAYGHFGRIDVEVPWEKLDAVDELKRAFNM.

Residue His-15 participates in ATP binding. Residue Asp-17 participates in Mg(2+) binding. Glu-43 is a K(+) binding site. Glu-56 and Gln-99 together coordinate L-methionine. The tract at residues 99–109 (QSPDIALGVNK) is flexible loop. ATP-binding positions include 173–175 (DGK), 239–240 (RF), Asp-248, 254–255 (RK), Ala-271, and Lys-275. Asp-248 contacts L-methionine. L-methionine is bound at residue Lys-279.

This sequence belongs to the AdoMet synthase family. Homotetramer; dimer of dimers. Mg(2+) is required as a cofactor. The cofactor is K(+).

Its subcellular location is the cytoplasm. The catalysed reaction is L-methionine + ATP + H2O = S-adenosyl-L-methionine + phosphate + diphosphate. It functions in the pathway amino-acid biosynthesis; S-adenosyl-L-methionine biosynthesis; S-adenosyl-L-methionine from L-methionine: step 1/1. Functionally, catalyzes the formation of S-adenosylmethionine (AdoMet) from methionine and ATP. The overall synthetic reaction is composed of two sequential steps, AdoMet formation and the subsequent tripolyphosphate hydrolysis which occurs prior to release of AdoMet from the enzyme. This chain is S-adenosylmethionine synthase, found in Kosmotoga olearia (strain ATCC BAA-1733 / DSM 21960 / TBF 19.5.1).